An 833-amino-acid polypeptide reads, in one-letter code: Coiled-coil domain-containing protein 110 (833 aa).

A coiled-coil region spans residues 431–778; sequence LQNYLKESVQ…REYLNLSDKI (348 aa).

The protein localises to the nucleus. This Macaca fascicularis (Crab-eating macaque) protein is Coiled-coil domain-containing protein 110 (CCDC110).